Here is a 2135-residue protein sequence, read N- to C-terminus: Plexin-B1 (2135 aa).

The first 19 residues, 1–19 (MPALGPALLQALWAGWVLT), serve as a signal peptide directing secretion. The Sema domain maps to 20 to 479 (LQPLPPTAFT…TQSTLLKVPV (460 aa)). Residues 20–1490 (LQPLPPTAFT…SPGAFPVAAQ (1471 aa)) lie on the Extracellular side of the membrane. An N-linked (GlcNAc...) asparagine glycan is attached at N31. Cystine bridges form between C79–C88, C111–C119, C252–C377, C268–C322, C340–C364, C482–C499, C488–C533, C491–C508, and C502–C514. A glycan (N-linked (GlcNAc...) asparagine) is linked at N334. An N-linked (GlcNAc...) asparagine glycan is attached at N543. Cysteines 570 and 588 form a disulfide. Disordered stretches follow at residues 671–829 (MVAS…TTFP) and 849–884 (LPEADEWTGGDAPAFSTSTLLSGDGDSAELEGPPAP). The segment covering 681–697 (SPDPPARGGPSPSPPTA) has biased composition (pro residues). Composition is skewed to low complexity over residues 698-710 (PKALATPAPDTLP) and 734-754 (SPWGPWAGSGSISSPGSTGSP). 3 consecutive IPT/TIG domains span residues 1070–1160 (PLIH…FAYQ), 1162–1249 (PKVH…FKYT), and 1252–1375 (PNIT…FSYE). N-linked (GlcNAc...) asparagine glycosylation is found at N1183, N1253, and N1330. The helical transmembrane segment at 1491–1511 (VGLGVGTSLLALGVIIIVLMY) threads the bilayer. Residues 1507–1539 (IVLMYRRKSKQALRDYKKVQIQLENLESSVRDR) adopt a coiled-coil conformation. The Cytoplasmic portion of the chain corresponds to 1512 to 2135 (RRKSKQALRD…AAVENKVTDL (624 aa)). Positions 1883-1908 (PWHLVKPSDEPEPPRPRRGSLRGGER) are disordered. The segment covering 1888–1897 (KPSDEPEPPR) has biased composition (basic and acidic residues).

Belongs to the plexin family. Monomer, and heterodimer with PLXNB2 after proteolytic processing. Binds RAC1 that has been activated by GTP binding. Interaction with SEMA4D promotes binding of cytoplasmic ligands. Interacts with PLXNA1. Interacts with ARHGEF11 and ARHGEF12. Interacts with ERBB2. Interacts with MET. Interacts with MST1R. Interacts with RRAS. Interacts with RHOD. Interacts with RND1. Interacts with NRP1 and NRP2. In terms of processing, phosphorylated on tyrosine residues by ERBB2 and MET upon SEMA4D binding. Post-translationally, proteolytic processing favors heterodimerization with PLXNB2 and SEMA4D binding. In terms of tissue distribution, highly expressed in fetal kidney, and at slightly lower levels in fetal brain, lung and liver.

It localises to the cell membrane. The protein localises to the secreted. In terms of biological role, receptor for SEMA4D. Plays a role in GABAergic synapse development. Mediates SEMA4A- and SEMA4D-dependent inhibitory synapse development. Plays a role in RHOA activation and subsequent changes of the actin cytoskeleton. Plays a role in axon guidance, invasive growth and cell migration. The chain is Plexin-B1 (PLXNB1) from Homo sapiens (Human).